We begin with the raw amino-acid sequence, 104 residues long: Large ribosomal subunit protein bL21 (104 aa).

Belongs to the bacterial ribosomal protein bL21 family. Part of the 50S ribosomal subunit. Contacts protein L20.

In terms of biological role, this protein binds to 23S rRNA in the presence of protein L20. This Tropheryma whipplei (strain Twist) (Whipple's bacillus) protein is Large ribosomal subunit protein bL21.